Consider the following 204-residue polypeptide: Small ribosomal subunit protein uS4 (204 aa).

The S4 RNA-binding domain occupies 94–157 (RRLDNVVYRL…KKLEVFKENL (64 aa)).

The protein belongs to the universal ribosomal protein uS4 family. In terms of assembly, part of the 30S ribosomal subunit. Contacts protein S5. The interaction surface between S4 and S5 is involved in control of translational fidelity.

In terms of biological role, one of the primary rRNA binding proteins, it binds directly to 16S rRNA where it nucleates assembly of the body of the 30S subunit. Its function is as follows. With S5 and S12 plays an important role in translational accuracy. The polypeptide is Small ribosomal subunit protein uS4 (Sulfurihydrogenibium sp. (strain YO3AOP1)).